The chain runs to 276 residues: Neuroendocrine protein 7B2 (276 aa).

Cys155 and Cys168 are joined by a disulfide.

Belongs to the 7B2 family. In terms of assembly, interacts with amon/PC2 early in the secretory pathway. Dissociation occurs at later stages.

It is found in the secreted. Acts as a molecular chaperone for neuroendocrine convertase amon/PC2, preventing its premature activation in the regulated secretory pathway. Binds to inactive amon in the endoplasmic reticulum and facilitates its transport from there to later compartments of the secretory pathway where it is proteolytically matured and activated. Also required for cleavage of amon. In Drosophila melanogaster (Fruit fly), this protein is Neuroendocrine protein 7B2.